Reading from the N-terminus, the 172-residue chain is MTHTPKDGPRANQDIRVPRVQLINDEGQHQGVVTIQEALAMAAEVGLDLVEIVPNAEPPVCKIIDLGKLKYQTQKKAAETRKKQKVIEIKEIKMRPNVDVHDYGVKLKAIHRFIGNGDKVKITLRFRGREMAHQDLGLKLLQRVKEDTSEIAKIESEPKLEGRQMMMVIAAK.

It belongs to the IF-3 family. As to quaternary structure, monomer.

Its subcellular location is the cytoplasm. Its function is as follows. IF-3 binds to the 30S ribosomal subunit and shifts the equilibrium between 70S ribosomes and their 50S and 30S subunits in favor of the free subunits, thus enhancing the availability of 30S subunits on which protein synthesis initiation begins. The protein is Translation initiation factor IF-3 of Bartonella henselae (strain ATCC 49882 / DSM 28221 / CCUG 30454 / Houston 1) (Rochalimaea henselae).